The chain runs to 304 residues: Porphobilinogen deaminase (304 aa).

Cys240 bears the S-(dipyrrolylmethanemethyl)cysteine mark.

The protein belongs to the HMBS family. As to quaternary structure, monomer. Dipyrromethane is required as a cofactor.

The catalysed reaction is 4 porphobilinogen + H2O = hydroxymethylbilane + 4 NH4(+). Its pathway is porphyrin-containing compound metabolism; protoporphyrin-IX biosynthesis; coproporphyrinogen-III from 5-aminolevulinate: step 2/4. Its function is as follows. Tetrapolymerization of the monopyrrole PBG into the hydroxymethylbilane pre-uroporphyrinogen in several discrete steps. The protein is Porphobilinogen deaminase of Xanthomonas campestris pv. campestris (strain ATCC 33913 / DSM 3586 / NCPPB 528 / LMG 568 / P 25).